Here is a 1762-residue protein sequence, read N- to C-terminus: Kinase D-interacting substrate of 220 kDa (1762 aa).

Residues 1 to 508 are Cytoplasmic-facing; sequence MSVLISQSVI…WLIVFLTLLL (508 aa). ANK repeat units follow at residues 45–74, 78–107, 111–140, 145–174, 178–207, 211–240, 244–273, 277–306, 310–339, 343–372, and 376–405; these read AAEQGNVEIVKELLKNGANCNLEDLDNWTA, ASKEGHIHIVEELLKSGASLEHRDMGGWTA, ACYKGRTDVVELLLSHGANPSVTGLYSVYP, AGRGHADIVHLLLQNGAKVNCSDKYGTTPL, ARKGHLECVKHLLAMGADVDQEGANSMTAL, VKGGYTQSVKEILKRNPNVNLTDKDGNTAL, SKEGHIEIVQDLLDAGTYVNIPDRSGDTVL, VRGGHVEIVRALLQKYADIDIRGQDNKTAL, VEKGNATMVRDILQCNPDTEICTKDGETPL, TKMRNIEVVELLLDKGAKVSAVDKKGDTPL, and IRGRSRRLAELLLRNPKDGRLLYRPNKAGE. Positions 440–953 constitute a KAP NTPase domain; the sequence is YDLYSSALAD…NIVSVTGRLL (514 aa). The helical transmembrane segment at 509 to 529 threads the bilayer; it reads CGGLGLVFAFTVDTNLAIAIS. Over 530–533 the chain is Extracellular; it reads LSFL. The helical transmembrane segment at 534–554 threads the bilayer; the sequence is ALIYIFFIVIYFGGRREGESW. Topologically, residues 555 to 668 are cytoplasmic; it reads NWAWALSTRL…SFVIFLFIVG (114 aa). The helical transmembrane segment at 669-689 threads the bilayer; that stretch reads CIIAGITLLAIFRVDPKHLTV. At 690-696 the chain is on the extracellular side; the sequence is NAILISI. A helical transmembrane segment spans residues 697 to 717; the sequence is ASVVGLAFVLNCRTWWQVLDS. The Cytoplasmic segment spans residues 718-1680; sequence LLNSQRKRLH…TPSTVTLNNN (963 aa). 2 positions are modified to phosphoserine: Ser882 and Ser885. Phosphothreonine is present on Thr914. Ser918 carries the post-translational modification Phosphoserine; by PKD. Residues 1089-1092 form a mediates interaction with CRKL region; sequence PRPP. Phosphoserine occurs at positions 1163, 1288, 1344, 1351, 1353, 1354, and 1357. Disordered stretches follow at residues 1279 to 1305, 1336 to 1358, 1390 to 1440, and 1452 to 1556; these read DPRFLNENSSAPVPHGESARRSSHTEL, RHSNLSWQSQTRRTPSLSSLNSQ, EGGT…DGRK, and YSSS…EPIR. Residues 1338 to 1350 show a composition bias toward polar residues; sequence SNLSWQSQTRRTP. The span at 1395 to 1422 shows a compositional bias: low complexity; the sequence is SSTISGRSSPHSTYYIGQSSSGGSIHST. A compositionally biased stretch (basic and acidic residues) spans 1423–1440; it reads LEQERGKEGELKQEDGRK. Over residues 1452-1462 the composition is skewed to polar residues; sequence YSSSGVSTNEA. Residues Ser1513, Ser1518, Ser1547, and Ser1566 each carry the phosphoserine modification. The span at 1514 to 1524 shows a compositional bias: acidic residues; sequence DEDESGTEESD. The segment covering 1529–1553 has biased composition (basic and acidic residues); it reads LKDDKDKKAEGKAERVCKSPEHSAE. Residues 1571–1628 are disordered; sequence DKKDSSDSGVRSNESSPNHSLHNEAADDSQLEKANLIELEDEGHSGKRGMPHSLSGLQ. A compositionally biased stretch (polar residues) spans 1579-1590; that stretch reads GVRSNESSPNHS. 2 positions are modified to phosphoserine: Ser1615 and Ser1625. At Thr1671 the chain carries Phosphothreonine. Ser1673 bears the Phosphoserine mark. At Thr1676 the chain carries Phosphothreonine. Positions 1704 to 1762 are disordered; that stretch reads ILRPGPSPNPTAVQNENLKSMAHKRSQRSSYTRLSKDASELHAASSESTGFGEERESIL. Residues 1757 to 1762 carry the PDZ-binding motif; the sequence is ERESIL.

As to quaternary structure, found in a complex, at least composed of KIDINS220, MAGI2, NTRK1 and RAPGEF2; the complex is mainly formed at late endosomes in a nerve growth factor (NGF)-dependent manner. Interacts with RAPGEF2; the interaction is strengthened after NGF stimulation. Isoform 2 interacts (via C-terminal domain) with MAGI2 isoform 1 (via PDZ domain). Interacts with NTRK1, NTRK2, NTRK3, ERKL and NGFR. Can form a ternary complex with NGFR and NTRK1 and this complex is affected by the expression levels of KIDINS220/ARMS. An increase in KIDINS220/ARMS expression leads to a decreased association of NGFR and NTRK1. Interacts (via PDZ-binding motif) with SNTA1 and SNTB2 (via PDZ domains). Interacts with EPHA4 and PRKD1. Tyrosine phosphorylated by NTRK1, NTRK2, EPHB2 and EPHA4. Phosphorylation at Ser-918 is induced by phorbol ester treatment. Phosphorylation by NTRK2 is induced by brain-derived neurotrophic factor (BDNF) and neurotrophin-4/5. Phosphorylation by NTRK1 is induced by nerve growth factor (NGF). In terms of tissue distribution, expressed in developing nervous system and in highly plastic areas of the adult brain. Also expressed in neuroendocrine cells, where it concentrates at the tip of neurites. Expressed in developing muscle and is concentrated at the neuromuscular junction (NMS). SNTA1 can regulate its localization in the NMS.

It localises to the membrane. The protein localises to the late endosome. Its function is as follows. Promotes a prolonged MAP-kinase signaling by neurotrophins through activation of a Rap1-dependent mechanism. Provides a docking site for the CRKL-C3G complex, resulting in Rap1-dependent sustained ERK activation. May play an important role in regulating postsynaptic signal transduction through the syntrophin-mediated localization of receptor tyrosine kinases such as EPHA4. In cooperation with SNTA1 can enhance EPHA4-induced JAK/STAT activation. Plays a role in nerve growth factor (NGF)-induced recruitment of RAPGEF2 to late endosomes and neurite outgrowth. May play a role in neurotrophin- and ephrin-mediated neuronal outgrowth and in axon guidance during neural development and in neuronal regeneration. In Rattus norvegicus (Rat), this protein is Kinase D-interacting substrate of 220 kDa (Kidins220).